The sequence spans 167 residues: S-ribosylhomocysteine lyase (167 aa).

Positions 54, 58, and 128 each coordinate Fe cation.

The protein belongs to the LuxS family. In terms of assembly, homodimer. Requires Fe cation as cofactor.

It catalyses the reaction S-(5-deoxy-D-ribos-5-yl)-L-homocysteine = (S)-4,5-dihydroxypentane-2,3-dione + L-homocysteine. In terms of biological role, involved in the synthesis of autoinducer 2 (AI-2) which is secreted by bacteria and is used to communicate both the cell density and the metabolic potential of the environment. The regulation of gene expression in response to changes in cell density is called quorum sensing. Catalyzes the transformation of S-ribosylhomocysteine (RHC) to homocysteine (HC) and 4,5-dihydroxy-2,3-pentadione (DPD). This is S-ribosylhomocysteine lyase from Haemophilus influenzae (strain PittGG).